The primary structure comprises 220 residues: UPF0319 protein Ent638_1476 (220 aa).

Residues 1 to 20 (MKTGIVSAVLALVMPVCVYA) form the signal peptide.

Belongs to the UPF0319 family.

The protein is UPF0319 protein Ent638_1476 of Enterobacter sp. (strain 638).